We begin with the raw amino-acid sequence, 228 residues long: HTH-type transcriptional activator FasR (228 aa).

Positions 1-39 (MSDLAKTAQRRALRSSGSARPDEDVPAPNRRGNRLPRDE) are disordered. In terms of domain architecture, HTH tetR-type spans 38–98 (DERRGQLLVV…AVLHRHVENL (61 aa)). Positions 61 to 80 (GMDEIADRAGVSKPVLYQHF) form a DNA-binding region, H-T-H motif.

Homodimer.

With respect to regulation, fasR:DNA binding is regulated by long-chain acyl-CoAs (C14- to C26-CoA), which act as effector molecules that modulate the affinity of FasR for its DNA binding sequences and therefore modulate the expression of the essential fas-acpS operon. FasR activity is not affected by mycolic acid biosynthesis intermediates. Its function is as follows. Transcriptional activator that plays a central role in sensing mycobacterial long-chain fatty acids and regulating lipid biosynthesis. Activates the expression of the genes encoding the fatty acid synthase (fas) and the 4-phosphopantetheinyl transferase (acpS), whose products are involved in the fatty acid and mycolic acid biosynthesis. Specifically binds to three conserved operator sequences present in the fas-acpS promoter region. Not essential for M.tuberculosis viability, although it is required for the optimal growth in vitro and for virulence in macrophages and in a mouse model of infection. The chain is HTH-type transcriptional activator FasR from Mycobacterium tuberculosis (strain ATCC 25618 / H37Rv).